The sequence spans 855 residues: Glucans biosynthesis glucosyltransferase H (855 aa).

6 consecutive transmembrane segments (helical) span residues 142–162, 196–216, 515–535, 572–592, 606–626, and 682–702; these read ILLTLMIGQTLVAGWYMKGIL, ILVLFGILFCWVSAGFWTALM, VFLTGVMSYLSAPLWFLFLVL, LFSTTIVLLFLPKLLSVILIW, TLSMLLEMLFSMLLAPVRMIF, and FLWWLAPIVGSLVLSIPVSVI.

The protein belongs to the glycosyltransferase 2 family. OpgH subfamily.

The protein resides in the cell inner membrane. The protein operates within glycan metabolism; osmoregulated periplasmic glucan (OPG) biosynthesis. In terms of biological role, involved in the biosynthesis of osmoregulated periplasmic glucans (OPGs). The sequence is that of Glucans biosynthesis glucosyltransferase H from Pseudomonas entomophila (strain L48).